The sequence spans 332 residues: Thiosulfate-binding protein (332 aa).

Positions 1–22 (MKRLFSASLLAAGLALGGAAHA) are cleaved as a signal peptide.

Belongs to the prokaryotic sulfate-binding protein family.

The protein resides in the periplasm. In terms of biological role, binds thiosulfate specifically and with high affinity. Has no detectable affinity for sulfate. The sequence is that of Thiosulfate-binding protein from Pseudomonas aeruginosa (strain ATCC 15692 / DSM 22644 / CIP 104116 / JCM 14847 / LMG 12228 / 1C / PRS 101 / PAO1).